The chain runs to 190 residues: Potassium-transporting ATPase KdpC subunit (190 aa).

A helical transmembrane segment spans residues 10-30; it reads VLFAVLTLICGVIYPYAITGI.

Belongs to the KdpC family. As to quaternary structure, the system is composed of three essential subunits: KdpA, KdpB and KdpC.

The protein localises to the cell inner membrane. Functionally, part of the high-affinity ATP-driven potassium transport (or Kdp) system, which catalyzes the hydrolysis of ATP coupled with the electrogenic transport of potassium into the cytoplasm. This subunit acts as a catalytic chaperone that increases the ATP-binding affinity of the ATP-hydrolyzing subunit KdpB by the formation of a transient KdpB/KdpC/ATP ternary complex. This Herminiimonas arsenicoxydans protein is Potassium-transporting ATPase KdpC subunit.